The primary structure comprises 41 residues: Photosystem I reaction center subunit IX (41 aa).

A helical membrane pass occupies residues 7–29 (YLSTAPVLLTVWLSITASGIMII).

The protein belongs to the PsaJ family.

The protein localises to the plastid. It localises to the chloroplast thylakoid membrane. Its function is as follows. May help in the organization of the PsaE and PsaF subunits. In Heterosigma akashiwo (strain NIES-293 / 8280G21-1), this protein is Photosystem I reaction center subunit IX.